The following is a 434-amino-acid chain: MVVKFTKSEALHKEALEHIVGGVNSPSRSFKAVGGGAPVAMERGKGAYFWDVDGNKYIDYLAAYGPIITGHAHPHITKAITTAAENGVLYGTPTALEVKFAKMLKEAMPALDKVRFVNSGTEAVMTTIRVARAYTGRTKIMKFAGCYHGHSDLVLVAAGSGPSTLGTPDSAGVPQSIAQEVITVPFNNVETLKEALDKWGHEVAAILVEPIVGNFGIVEPKTGFLEKVNELVHEAGALVIYDEVITAFRFMYGGAQDLLGVTPDLTALGKVIGGGLPIGAYGGKKEIMEQVAPLGPAYQAGTMAGNPASMASGIACLEVLQQEGLYEKLDELGAMLEKGILEQAEKHNIDITLNRLKGALTVYFTTNTIEDYDAAQDTDGEMFGKFFKLMLQEGINLAPSKYEAWFLTTEHTKEDIEYTIEAVGRAFAALANNK.

K270 bears the N6-(pyridoxal phosphate)lysine mark.

Belongs to the class-III pyridoxal-phosphate-dependent aminotransferase family. HemL subfamily. As to quaternary structure, homodimer. Pyridoxal 5'-phosphate serves as cofactor.

The protein resides in the cytoplasm. The catalysed reaction is (S)-4-amino-5-oxopentanoate = 5-aminolevulinate. Its pathway is porphyrin-containing compound metabolism; protoporphyrin-IX biosynthesis; 5-aminolevulinate from L-glutamyl-tRNA(Glu): step 2/2. The chain is Glutamate-1-semialdehyde 2,1-aminomutase 1 from Bacillus cereus (strain ATCC 10987 / NRS 248).